The following is a 205-amino-acid chain: Glycerol-3-phosphate acyltransferase (205 aa).

Residues 1–3 (MSA) lie on the Periplasmic side of the membrane. The chain crosses the membrane as a helical span at residues 4–24 (IAPGMILIAYLCGSISSAILV). Residues 25–52 (CRLCGLPDPRTSGSGNPGATNVLRIGGK) lie on the Cytoplasmic side of the membrane. The chain crosses the membrane as a helical span at residues 53-73 (GAAVAVLIFDVLKGMLPVWGA). The Periplasmic segment spans residues 74–80 (YELGVSP). Residues 81–101 (FWLGLIAIAACLGHIWPVFFG) traverse the membrane as a helical segment. Residues 102–111 (FKGGKGVATA) lie on the Cytoplasmic side of the membrane. A helical transmembrane segment spans residues 112-132 (FGAIAPIGWDLTGVMAGTWLL). Over 133 to 137 (TVLLS) the chain is Periplasmic. The chain crosses the membrane as a helical span at residues 138-158 (GYSSLGAIVSALIAPFYVWWF). Over 159 to 205 (KPQFTFPVSMLSCLILLRHHDNIQRLWRRQETKIWTKFKRKREKDPE) the chain is Cytoplasmic.

The protein belongs to the PlsY family. Probably interacts with PlsX.

The protein localises to the cell inner membrane. The enzyme catalyses sn-glycerol 3-phosphate + an acyl-CoA = a 1-acyl-sn-glycero-3-phosphate + CoA. It carries out the reaction a fatty acyl-[ACP] + sn-glycerol 3-phosphate = a 1-acyl-sn-glycero-3-phosphate + holo-[ACP]. It participates in lipid metabolism; phospholipid metabolism. Its function is as follows. Catalyzes the transfer of an acyl group from acyl-ACP to glycerol-3-phosphate (G3P) to form lysophosphatidic acid (LPA). This enzyme can also utilize acyl-CoA as fatty acyl donor, but not acyl-PO(4). The polypeptide is Glycerol-3-phosphate acyltransferase (Escherichia coli O8 (strain IAI1)).